Here is a 198-residue protein sequence, read N- to C-terminus: Superoxide dismutase [Fe] (198 aa).

Residues His-27, His-74, Asp-157, and His-161 each contribute to the Fe(3+) site.

The protein belongs to the iron/manganese superoxide dismutase family. As to quaternary structure, homodimer. Fe(3+) is required as a cofactor.

The enzyme catalyses 2 superoxide + 2 H(+) = H2O2 + O2. In terms of biological role, destroys superoxide anion radicals which are normally produced within the cells and which are toxic to biological systems. The chain is Superoxide dismutase [Fe] (sodB) from Pseudomonas putida (Arthrobacter siderocapsulatus).